A 151-amino-acid chain; its full sequence is Lipoprotein signal peptidase (151 aa).

The next 2 membrane-spanning stretches (helical) occupy residues 61-81 and 88-107; these read GSQW…IWIG and SRWQ…GNGI. Catalysis depends on residues Asp-117 and Asp-133. Residues 128–148 form a helical membrane-spanning segment; the sequence is VFNLADVAINLAVLCLLIEAI.

This sequence belongs to the peptidase A8 family.

The protein localises to the cell inner membrane. It carries out the reaction Release of signal peptides from bacterial membrane prolipoproteins. Hydrolyzes -Xaa-Yaa-Zaa-|-(S,diacylglyceryl)Cys-, in which Xaa is hydrophobic (preferably Leu), and Yaa (Ala or Ser) and Zaa (Gly or Ala) have small, neutral side chains.. Its pathway is protein modification; lipoprotein biosynthesis (signal peptide cleavage). This protein specifically catalyzes the removal of signal peptides from prolipoproteins. The sequence is that of Lipoprotein signal peptidase from Synechococcus sp. (strain RCC307).